Consider the following 214-residue polypeptide: Orotate phosphoribosyltransferase (214 aa).

Residue Lys-26 coordinates 5-phospho-alpha-D-ribose 1-diphosphate. 34–35 (FF) is an orotate binding site. Residues 72-73 (YK), Arg-99, Lys-100, Lys-103, His-105, and 124-132 (DDVITAGTA) each bind 5-phospho-alpha-D-ribose 1-diphosphate. Positions 128 and 156 each coordinate orotate.

Belongs to the purine/pyrimidine phosphoribosyltransferase family. PyrE subfamily. Homodimer. Mg(2+) serves as cofactor.

It carries out the reaction orotidine 5'-phosphate + diphosphate = orotate + 5-phospho-alpha-D-ribose 1-diphosphate. It functions in the pathway pyrimidine metabolism; UMP biosynthesis via de novo pathway; UMP from orotate: step 1/2. Catalyzes the transfer of a ribosyl phosphate group from 5-phosphoribose 1-diphosphate to orotate, leading to the formation of orotidine monophosphate (OMP). The sequence is that of Orotate phosphoribosyltransferase from Proteus mirabilis (strain HI4320).